A 219-amino-acid chain; its full sequence is MKAINIALDGPAAAGKSTIAKRVASELSMIYVDTGAMYRALTYKYLKLNKTEDFAKLVDQTTLDLTYKADKGQCVILDNEDVTDFLRNNDVTQHVSYVASKEPVRLFAVKKQKELAAEKGIVMDGRDIGTVVLPDADLKVYMIASVEERAERRYKDNQLRGIESNFEDLKRDIEARDQYDMNREISPLRKADDAVTLDTTGKTIEEVTDEILAMVSQIK.

10 to 18 (GPAAAGKST) is a binding site for ATP.

It belongs to the cytidylate kinase family. Type 1 subfamily.

It is found in the cytoplasm. It carries out the reaction CMP + ATP = CDP + ADP. It catalyses the reaction dCMP + ATP = dCDP + ADP. This chain is Cytidylate kinase, found in Staphylococcus aureus (strain bovine RF122 / ET3-1).